A 341-amino-acid chain; its full sequence is Platelet-activating factor receptor (341 aa).

Residues 1–16 (MEQNGSFRVDSEFRYT) are Extracellular-facing. N-linked (GlcNAc...) asparagine glycosylation occurs at asparagine 4. The chain crosses the membrane as a helical span at residues 17 to 38 (LFPIVYSVIFVLGVVANGYVLW). The Cytoplasmic segment spans residues 39–54 (VFATLYPSKKLNEIKI). The helical transmembrane segment at 55-74 (FMVNLTVADLLFLMTLPLWI) threads the bilayer. Residues 75-91 (VYYSNEGDWIVHKFLCN) are Extracellular-facing. Cysteine 90 and cysteine 173 are joined by a disulfide. Residues 92–113 (LAGCLFFINTYCSVAFLGVITY) traverse the membrane as a helical segment. At 114–133 (NRYQAVAYPIKTAQATTRKR) the chain is on the cytoplasmic side. A helical membrane pass occupies residues 134-155 (GITLSLVIWISIAATASYFLAT). At 156–184 (DSTNVVPKKDGSGNITRCFEHYEPYSVPI) the chain is on the extracellular side. N-linked (GlcNAc...) asparagine glycosylation is present at asparagine 169. The helical transmembrane segment at 185-205 (LVVHIFITSCFFLVFFLIFYC) threads the bilayer. The Cytoplasmic portion of the chain corresponds to 206–233 (NMVIIHTLLTRPVRQQRKPEVKRRALWM). Residues 234–254 (VCTVLAVFVICFVPHHVVQLP) form a helical membrane-spanning segment. Topologically, residues 255-275 (WTLAELGYQTNFHQAINDAHQ) are extracellular. Residues 276 to 295 (ITLCLLSTNCVLDPVIYCFL) traverse the membrane as a helical segment. Over 296–341 (TKKFRKHLSEKFYSMRSSRKCSRATSDTCTEVMMPANQTPVLPLKN) the chain is Cytoplasmic.

This sequence belongs to the G-protein coupled receptor 1 family. As to quaternary structure, interacts with ARRB1. Present in almost all organs including spleen, small intestine, kidney, lung, liver and brain.

The protein localises to the cell membrane. Functionally, receptor for platelet activating factor, a chemotactic phospholipid mediator that possesses potent inflammatory, smooth-muscle contractile and hypotensive activity. Seems to mediate its action via a G protein that activates a phosphatidylinositol-calcium second messenger system. In Rattus norvegicus (Rat), this protein is Platelet-activating factor receptor (Ptafr).